Reading from the N-terminus, the 117-residue chain is Small ribosomal subunit protein bS6 (117 aa).

Belongs to the bacterial ribosomal protein bS6 family.

Binds together with bS18 to 16S ribosomal RNA. This chain is Small ribosomal subunit protein bS6, found in Roseobacter denitrificans (strain ATCC 33942 / OCh 114) (Erythrobacter sp. (strain OCh 114)).